Consider the following 235-residue polypeptide: Proteasome subunit alpha (235 aa).

Belongs to the peptidase T1A family. In terms of assembly, the 20S proteasome core is composed of 14 alpha and 14 beta subunits that assemble into four stacked heptameric rings, resulting in a barrel-shaped structure. The two inner rings, each composed of seven catalytic beta subunits, are sandwiched by two outer rings, each composed of seven alpha subunits. The catalytic chamber with the active sites is on the inside of the barrel. Has a gated structure, the ends of the cylinder being occluded by the N-termini of the alpha-subunits. Is capped by the proteasome-associated ATPase, ARC.

Its subcellular location is the cytoplasm. The protein operates within protein degradation; proteasomal Pup-dependent pathway. The formation of the proteasomal ATPase ARC-20S proteasome complex, likely via the docking of the C-termini of ARC into the intersubunit pockets in the alpha-rings, may trigger opening of the gate for substrate entry. Interconversion between the open-gate and close-gate conformations leads to a dynamic regulation of the 20S proteasome proteolysis activity. In terms of biological role, component of the proteasome core, a large protease complex with broad specificity involved in protein degradation. The sequence is that of Proteasome subunit alpha from Arthrobacter sp. (strain FB24).